The chain runs to 648 residues: S-M checkpoint control protein rad4 (648 aa).

2 consecutive BRCT domains span residues 2 to 92 (GSSK…DDGL) and 96 to 185 (KHFL…YFQL). The Nuclear localization signal signature appears at 242-249 (KRGKKRDR). BRCT domains lie at 298-384 (NEAK…EHAL) and 392-486 (SLVP…SPWA). Ser592 carries the post-translational modification Phosphoserine. Residues 643-648 (RKLRRR) carry the Nuclear localization signal motif.

As to quaternary structure, interacts with drc1/sld2. Interacts (via BRCT1,2 domains) with crb2; a single rad4 molecule interacts simultaneously with both 'Thr-187' phosphorylation sites in a crb2 dimer.

It localises to the nucleus. Its function is as follows. Essential component for DNA replication and also the checkpoint control system which couples S and M phases. May directly or indirectly interact with chromatin proteins to form the complex required for the initiation and/or progression of DNA synthesis. Interacts simultaneously with both 'Thr-187' phosphorylation sites in a crb2 dimer for establishing the DNA checkpoint. This Schizosaccharomyces pombe (strain 972 / ATCC 24843) (Fission yeast) protein is S-M checkpoint control protein rad4 (rad4).